Consider the following 353-residue polypeptide: Pleckstrin-2 (353 aa).

The residue at position 1 (M1) is an N-acetylmethionine. The 101-residue stretch at 4–104 (GVLKEGFLVK…WAFEITGAIH (101 aa)) folds into the PH 1 domain. S120 carries the post-translational modification Phosphoserine. A DEP domain is found at 139–225 (TSTGIRPSPN…DSTALYTFAE (87 aa)). The region spanning 247 to 353 (TVVKQGYLSK…EWIEAIKKLT (107 aa)) is the PH 2 domain.

In terms of tissue distribution, ubiquitous. Most abundant in the thymus, large bowel, small bowel, stomach, and prostate.

The protein localises to the cell projection. It localises to the lamellipodium membrane. The protein resides in the cytoplasm. It is found in the cytoskeleton. In terms of biological role, may help orchestrate cytoskeletal arrangement. Contribute to lamellipodia formation. Overexpression of pleckstrin 2 causes large lamellipodia and peripheral ruffle formation. This Mus musculus (Mouse) protein is Pleckstrin-2 (Plek2).